We begin with the raw amino-acid sequence, 735 residues long: Muskelin (735 aa).

Position 2 is an N-acetylalanine (Ala2). Residues 172-204 (REQEAIRLCLKHFRQHNYTEAFESLQKKTKIAL) enclose the LisH domain. One can recognise a CTLH domain in the interval 206-258 (HPMLTDMHDKLVLKGDFDACEELIEKAVNDGLFNQYISQQEYKPRWSQIIPKS). Kelch repeat units follow at residues 284 to 330 (TVYL…SCHK), 339 to 391 (QIYT…FDHQ), 400 to 458 (MIYT…SRIG), 469 to 515 (CLYV…TGFT), 526 to 578 (EIHV…SLQE), and 597 to 651 (VHYL…AQMD).

In terms of assembly, homodimer; may form higher oligomers. Identified in the CTLH complex that contains GID4, RANBP9 and/or RANBP10, MKLN1, MAEA, RMND5A (or alternatively its paralog RMND5B), GID8, ARMC8, WDR26 and YPEL5. Within this complex, MAEA, RMND5A (or alternatively its paralog RMND5B), GID8, WDR26, and RANBP9 and/or RANBP10 form the catalytic core, while GID4, MKLN1, ARMC8 and YPEL5 have ancillary roles. Interacts with RANBP9. Part of a complex consisting of RANBP9, MKLN1 and GID8. Interacts with GABRA1. Interacts with the C-terminal tail of PTGER3.

It localises to the cytoplasm. The protein localises to the cell projection. Its subcellular location is the ruffle. It is found in the cell cortex. The protein resides in the synapse. It localises to the postsynapse. Its function is as follows. Component of the CTLH E3 ubiquitin-protein ligase complex that selectively accepts ubiquitin from UBE2H and mediates ubiquitination and subsequent proteasomal degradation of the transcription factor HBP1. Required for internalization of the GABA receptor GABRA1 from the cell membrane via endosomes and subsequent GABRA1 degradation. Acts as a mediator of cell spreading and cytoskeletal responses to the extracellular matrix component THBS1. The protein is Muskelin (Mkln1) of Rattus norvegicus (Rat).